Reading from the N-terminus, the 445-residue chain is Probable D-serine dehydratase (445 aa).

Lysine 111 carries the N6-(pyridoxal phosphate)lysine modification.

Belongs to the serine/threonine dehydratase family. DsdA subfamily. Requires pyridoxal 5'-phosphate as cofactor.

The catalysed reaction is D-serine = pyruvate + NH4(+). The chain is Probable D-serine dehydratase from Burkholderia pseudomallei (strain 1106a).